We begin with the raw amino-acid sequence, 159 residues long: Phosphopantetheine adenylyltransferase (159 aa).

T10 lines the substrate pocket. ATP-binding positions include 10–11 and H18; that span reads TF. 3 residues coordinate substrate: K42, M74, and R88. Residues 89 to 91, E99, and 124 to 130 each bind ATP; these read GLR and WSFISSS.

The protein belongs to the bacterial CoaD family. As to quaternary structure, homohexamer. Mg(2+) serves as cofactor.

Its subcellular location is the cytoplasm. The catalysed reaction is (R)-4'-phosphopantetheine + ATP + H(+) = 3'-dephospho-CoA + diphosphate. It functions in the pathway cofactor biosynthesis; coenzyme A biosynthesis; CoA from (R)-pantothenate: step 4/5. Its function is as follows. Reversibly transfers an adenylyl group from ATP to 4'-phosphopantetheine, yielding dephospho-CoA (dPCoA) and pyrophosphate. The chain is Phosphopantetheine adenylyltransferase from Yersinia enterocolitica serotype O:8 / biotype 1B (strain NCTC 13174 / 8081).